The primary structure comprises 392 residues: MNVFNTASDEDIKKGLASDVYFERTISAIGDKCNDLRVAMEATVSGPLDTWINFTGLDEVLKLLEGLDVDLYAIPEGTILFPRDANGLPVPFIRVEGRYCDFGMYETAILGFICQASGISTKASKVRLAAGDSPFFSFGIRRMHPAISPMIDRSAYIGGADGVSGILGAKLIDQDPVGTMPHALSIMLGDEEAWKLTLENTKNGQKSVLLIDTYMDEKFAAIKIAEMFDKVDYIRLDTPSSRRGNFEALIREVRWELALRGRSDIKIMVSGGLDENTVKKLREAGAEAFGVGTSISSAKPFDFAMDIVEVNGKPETKRGKMSGRKNVLRCTSCHRIEVVPANVQEKTCICGGSMQNLLVKYLSHGKRTSEYPRPKEIRSRSMKELEYFKDIS.

Residues Y21, F138, and T179 each coordinate nicotinate. A Phosphohistidine modification is found at H182. R235 contributes to the nicotinate binding site. Positions 240, 272, and 293 each coordinate 5-phospho-alpha-D-ribose 1-diphosphate. Residues C330, C333, C348, and C350 each contribute to the Zn(2+) site.

This sequence belongs to the NAPRTase family. Highly divergent. In terms of assembly, homodimer. Forms a trimer of dimers in the crystal. Post-translationally, transiently phosphorylated on a His residue during the reaction cycle. Phosphorylation strongly increases the affinity for substrates and increases the rate of nicotinate D-ribonucleotide production. Dephosphorylation regenerates the low-affinity form of the enzyme, leading to product release.

It catalyses the reaction nicotinate + 5-phospho-alpha-D-ribose 1-diphosphate + ATP + H2O = nicotinate beta-D-ribonucleotide + ADP + phosphate + diphosphate. It functions in the pathway cofactor biosynthesis; NAD(+) biosynthesis; nicotinate D-ribonucleotide from nicotinate: step 1/1. In terms of biological role, catalyzes the synthesis of beta-nicotinate D-ribonucleotide from nicotinate and 5-phospho-D-ribose 1-phosphate at the expense of ATP. In Thermoplasma acidophilum (strain ATCC 25905 / DSM 1728 / JCM 9062 / NBRC 15155 / AMRC-C165), this protein is Putative nicotinate phosphoribosyltransferase.